The chain runs to 145 residues: Allergen Sin a 1 (145 aa).

The tract at residues Ser34–Pro62 is disordered. The propeptide occupies Trp40–Asn54. Positions Leu42–Glu53 are enriched in acidic residues.

It belongs to the 2S seed storage albumins family. As to quaternary structure, the protein consists of two chains linked by disulfide bonds.

Functionally, this is a 2S seed storage protein. This is Allergen Sin a 1 from Sinapis alba (White mustard).